The sequence spans 20 residues: Phospholipase A2 II-5b (20 aa).

It belongs to the phospholipase A2 family. Group I subfamily. The cofactor is Ca(2+). Expressed by the venom gland.

Its subcellular location is the secreted. The enzyme catalyses a 1,2-diacyl-sn-glycero-3-phosphocholine + H2O = a 1-acyl-sn-glycero-3-phosphocholine + a fatty acid + H(+). Functionally, snake venom phospholipase A2 (PLA2) that exhibits weak enzymatic activity. PLA2 catalyzes the calcium-dependent hydrolysis of the 2-acyl groups in 3-sn-phosphoglycerides. This Notechis scutatus scutatus (Mainland tiger snake) protein is Phospholipase A2 II-5b.